Consider the following 839-residue polypeptide: ATP-binding cassette sub-family F member 1 (839 aa).

The interval 1 to 258 (MPKGPKQQPP…KKEKKKLKKQ (258 aa)) is disordered. Residue Ser-22 is modified to Phosphoserine. Positions 29–39 (KKGKKDKKTKK) are enriched in basic residues. Positions 47 to 64 (VEDKQAGEEEKLQKEKEQ) are enriched in basic and acidic residues. The span at 71-83 (QKKKRDTRKGRRK) shows a compositional bias: basic residues. Ser-105, Ser-109, and Ser-140 each carry phosphoserine. A compositionally biased stretch (acidic residues) spans 136–149 (IQDESEEEKEEEEE). Positions 150–162 (KPVLKPAKPEKNR) are enriched in basic and acidic residues. Phosphothreonine is present on Thr-195. At Ser-197 the chain carries Phosphoserine. A compositionally biased stretch (basic and acidic residues) spans 206–223 (TKEKEPPRPGKDKDKKGA). The residue at position 227 (Ser-227) is a Phosphoserine. Basic residues predominate over residues 247-256 (LSKKEKKKLK). The ABC transporter 1 domain maps to 298-542 (IKLEKFSISA…MYQQKQKELL (245 aa)). Residue 330 to 337 (GPNGKGKT) coordinates ATP. Positions 553-574 (KELKAGGKSTKQAEKQTKEVLT) are enriched in basic and acidic residues. Residues 553–600 (KELKAGGKSTKQAEKQTKEVLTRKQQKCRRKNQDEESQDPPELLKRPR) form a disordered region. Ser-589 is modified (phosphoserine). One can recognise an ABC transporter 2 domain in the interval 619–834 (LGLHGVTFGY…VLEALGEVMV (216 aa)). Residue 652–659 (GPNGVGKS) coordinates ATP.

Interacts (via N-terminus) with EIF2S1; the interaction is independent of its phosphorylated status. Associates (via both ABC transporter domains) with the ribosomes. In terms of processing, phosphorylated at phosphoserine and phosphothreonine. Phosphorylation on Ser-109 and Ser-140 by CK2; inhibits association of EIF2 with ribosomes.

The protein resides in the cytoplasm. Its subcellular location is the nucleus. It localises to the nucleoplasm. It is found in the nucleus envelope. In terms of biological role, required for efficient Cap- and IRES-mediated mRNA translation initiation. Not involved in the ribosome biogenesis. The polypeptide is ATP-binding cassette sub-family F member 1 (Abcf1) (Rattus norvegicus (Rat)).